The chain runs to 397 residues: 1-deoxy-D-xylulose 5-phosphate reductoisomerase (397 aa).

Thr-10, Gly-11, Ser-12, Ile-13, Gly-36, Asn-38, and Asn-124 together coordinate NADPH. Lys-125 provides a ligand contact to 1-deoxy-D-xylulose 5-phosphate. Glu-126 is a binding site for NADPH. Asp-150 lines the Mn(2+) pocket. Residues Ser-151, Glu-152, Ser-186, and His-209 each coordinate 1-deoxy-D-xylulose 5-phosphate. Glu-152 contacts Mn(2+). NADPH is bound at residue Gly-215. Positions 222, 227, 228, and 231 each coordinate 1-deoxy-D-xylulose 5-phosphate. Position 231 (Glu-231) interacts with Mn(2+).

The protein belongs to the DXR family. Mg(2+) serves as cofactor. The cofactor is Mn(2+).

It catalyses the reaction 2-C-methyl-D-erythritol 4-phosphate + NADP(+) = 1-deoxy-D-xylulose 5-phosphate + NADPH + H(+). It participates in isoprenoid biosynthesis; isopentenyl diphosphate biosynthesis via DXP pathway; isopentenyl diphosphate from 1-deoxy-D-xylulose 5-phosphate: step 1/6. Catalyzes the NADPH-dependent rearrangement and reduction of 1-deoxy-D-xylulose-5-phosphate (DXP) to 2-C-methyl-D-erythritol 4-phosphate (MEP). The protein is 1-deoxy-D-xylulose 5-phosphate reductoisomerase of Photobacterium profundum (strain SS9).